The following is a 183-amino-acid chain: Holliday junction branch migration complex subunit RuvA (183 aa).

The interval 1–64 is domain I; that stretch reads MIVAIEGIVS…EDSHKLYGFL (64 aa). Positions 65–138 are domain II; sequence DTNEQRMFEL…SDAKINIENS (74 aa). A region of interest (flexible linker) is located at residue S138. A domain III region spans residues 138–183; the sequence is SNQDHAQALAALLSLGFKQENILKVLRTCESQNTSELIKEALKKLA.

This sequence belongs to the RuvA family. In terms of assembly, homotetramer. Forms an RuvA(8)-RuvB(12)-Holliday junction (HJ) complex. HJ DNA is sandwiched between 2 RuvA tetramers; dsDNA enters through RuvA and exits via RuvB. An RuvB hexamer assembles on each DNA strand where it exits the tetramer. Each RuvB hexamer is contacted by two RuvA subunits (via domain III) on 2 adjacent RuvB subunits; this complex drives branch migration. In the full resolvosome a probable DNA-RuvA(4)-RuvB(12)-RuvC(2) complex forms which resolves the HJ.

The protein localises to the cytoplasm. The RuvA-RuvB-RuvC complex processes Holliday junction (HJ) DNA during genetic recombination and DNA repair, while the RuvA-RuvB complex plays an important role in the rescue of blocked DNA replication forks via replication fork reversal (RFR). RuvA specifically binds to HJ cruciform DNA, conferring on it an open structure. The RuvB hexamer acts as an ATP-dependent pump, pulling dsDNA into and through the RuvAB complex. HJ branch migration allows RuvC to scan DNA until it finds its consensus sequence, where it cleaves and resolves the cruciform DNA. This Campylobacter lari (strain RM2100 / D67 / ATCC BAA-1060) protein is Holliday junction branch migration complex subunit RuvA.